The chain runs to 301 residues: Coiled-coil domain-containing protein 50 (301 aa).

Residues 57–131 adopt a coiled-coil conformation; sequence QVAKQLQEEE…LQEEKKRKKH (75 aa). Basic and acidic residues-rich tracts occupy residues 123-142, 161-175, and 214-262; these read QEEK…KVYE, VYDK…SDAE, and AFKK…DKSS. 2 disordered regions span residues 123–175 and 214–301; these read QEEK…SDAE and AFKK…RRKQ.

Post-translationally, phosphorylated on tyrosine residues.

Functionally, involved in EGFR signaling. In Gallus gallus (Chicken), this protein is Coiled-coil domain-containing protein 50 (CCDC50).